Here is a 299-residue protein sequence, read N- to C-terminus: Protoheme IX farnesyltransferase (299 aa).

8 consecutive transmembrane segments (helical) span residues 24–44 (VVAL…DQGM), 46–66 (WNAL…AAAI), 94–114 (VHAL…LAWG), 118–138 (LTAW…TLFL), 146–166 (IVLG…SVTG), 172–192 (ALLL…ALAV), 232–252 (LPFI…ALGV), and 278–298 (ITYL…PVTL).

It belongs to the UbiA prenyltransferase family. Protoheme IX farnesyltransferase subfamily.

It localises to the cell inner membrane. It carries out the reaction heme b + (2E,6E)-farnesyl diphosphate + H2O = Fe(II)-heme o + diphosphate. Its pathway is porphyrin-containing compound metabolism; heme O biosynthesis; heme O from protoheme: step 1/1. Converts heme B (protoheme IX) to heme O by substitution of the vinyl group on carbon 2 of heme B porphyrin ring with a hydroxyethyl farnesyl side group. The sequence is that of Protoheme IX farnesyltransferase from Hahella chejuensis (strain KCTC 2396).